We begin with the raw amino-acid sequence, 135 residues long: Peptide methionine sulfoxide reductase MsrB (135 aa).

The MsrB domain maps to 13–135; the sequence is DADWREQLTP…NGHSMVFEPV (123 aa). Zn(2+) contacts are provided by cysteine 52, cysteine 55, cysteine 101, and cysteine 104. Catalysis depends on cysteine 124, which acts as the Nucleophile.

The protein belongs to the MsrB Met sulfoxide reductase family. Requires Zn(2+) as cofactor.

The catalysed reaction is L-methionyl-[protein] + [thioredoxin]-disulfide + H2O = L-methionyl-(R)-S-oxide-[protein] + [thioredoxin]-dithiol. In Agrobacterium fabrum (strain C58 / ATCC 33970) (Agrobacterium tumefaciens (strain C58)), this protein is Peptide methionine sulfoxide reductase MsrB.